Consider the following 216-residue polypeptide: Early E3 25 kDa glycoprotein (216 aa).

Asparagine 25, asparagine 82, asparagine 97, asparagine 109, asparagine 142, asparagine 147, and asparagine 160 each carry an N-linked (GlcNAc...) asparagine; by host glycan.

This chain is Early E3 25 kDa glycoprotein, found in Canis lupus familiaris (Dog).